Here is a 550-residue protein sequence, read N- to C-terminus: Transcription factor 7-like 1-D (550 aa).

Positions 1–61 (MPQLNSGXGD…SENHSSDSDS (61 aa)) are interaction with CTNNB1-A. 4 disordered regions span residues 1–77 (MPQL…EKPR), 182–212 (GTPP…PYYP), 390–473 (WSAR…SLTT), and 488–514 (ASKS…SRPI). Composition is skewed to basic and acidic residues over residues 17-32 (ELIR…EKSP) and 52-77 (SENH…EKPR). Positions 109–311 (LGGITCPMVP…SPNLSMKSNV (203 aa)) are interaction with AES and TLE4-A. The segment at residues 323–391 (IKKPLNAFML…LHSQLYPSWS (69 aa)) is a DNA-binding region (HMG box). Positions 406–415 (KQSPEMENYT) are enriched in basic and acidic residues. The interval 407–550 (QSPEMENYTK…PLPLVARSSD (144 aa)) is interaction with CTBP-B. Low complexity predominate over residues 444 to 455 (SPATPSAALASP).

It belongs to the TCF/LEF family. In terms of assembly, interacts with csnk1e, ctnnb1-A, ctbp-B, dact1-A and gsk3b. May interact with ase and tle4-A. Post-translationally, phosphorylated. Phosphorylation by csnk1e promotes binding to ctnnb1-A while phosphorylation by gsk3b may reverse this effect.

Its subcellular location is the nucleus. Participates in the Wnt signaling pathway. Binds to DNA and acts as a repressor in the absence of ctnnb1-A and possibly ctnnb1-B, and as an activator in the presence of these proteins. Required early in development for the establishment of the dorsal body axis in response to maternal Wnt signaling. This is Transcription factor 7-like 1-D (tcf7l1-d) from Xenopus laevis (African clawed frog).